The following is a 167-amino-acid chain: Peptide deformylase (167 aa).

Cys-91 and His-133 together coordinate Fe cation. Glu-134 is an active-site residue. His-137 provides a ligand contact to Fe cation.

This sequence belongs to the polypeptide deformylase family. Fe(2+) serves as cofactor.

The enzyme catalyses N-terminal N-formyl-L-methionyl-[peptide] + H2O = N-terminal L-methionyl-[peptide] + formate. Functionally, removes the formyl group from the N-terminal Met of newly synthesized proteins. Requires at least a dipeptide for an efficient rate of reaction. N-terminal L-methionine is a prerequisite for activity but the enzyme has broad specificity at other positions. This chain is Peptide deformylase, found in Pseudoalteromonas translucida (strain TAC 125).